A 284-amino-acid chain; its full sequence is D-tagatose-1,6-bisphosphate aldolase subunit GatY (284 aa).

D82 acts as the Proton donor in catalysis. Residues H83 and H180 each contribute to the Zn(2+) site. G181 lines the dihydroxyacetone phosphate pocket. Residue H208 participates in Zn(2+) binding. Dihydroxyacetone phosphate-binding positions include 209 to 211 and 230 to 233; these read GAS and NVAT.

It belongs to the class II fructose-bisphosphate aldolase family. TagBP aldolase GatY subfamily. In terms of assembly, forms a complex with GatZ. The cofactor is Zn(2+).

The catalysed reaction is D-tagatofuranose 1,6-bisphosphate = D-glyceraldehyde 3-phosphate + dihydroxyacetone phosphate. It functions in the pathway carbohydrate metabolism; D-tagatose 6-phosphate degradation; D-glyceraldehyde 3-phosphate and glycerone phosphate from D-tagatose 6-phosphate: step 2/2. Functionally, catalytic subunit of the tagatose-1,6-bisphosphate aldolase GatYZ, which catalyzes the reversible aldol condensation of dihydroxyacetone phosphate (DHAP or glycerone-phosphate) with glyceraldehyde 3-phosphate (G3P) to produce tagatose 1,6-bisphosphate (TBP). Requires GatZ subunit for full activity and stability. Is involved in the catabolism of galactitol. This is D-tagatose-1,6-bisphosphate aldolase subunit GatY from Escherichia coli O157:H7.